Here is an 87-residue protein sequence, read N- to C-terminus: UPF0367 protein SynRCC307_0258 (87 aa).

It belongs to the UPF0367 family.

The chain is UPF0367 protein SynRCC307_0258 from Synechococcus sp. (strain RCC307).